The sequence spans 601 residues: Jacalin-related lectin 3 (601 aa).

3 consecutive Jacalin-type lectin domains span residues P13–P155, A240–E382, and P438–H583.

This sequence belongs to the jacalin lectin family.

The polypeptide is Jacalin-related lectin 3 (JAL3) (Arabidopsis thaliana (Mouse-ear cress)).